The chain runs to 164 residues: Thiol peroxidase (164 aa).

Positions 18–163 (VKTGETAPEF…FESALEAYRN (146 aa)) constitute a Thioredoxin domain. Catalysis depends on Cys-60, which acts as the Cysteine sulfenic acid (-SOH) intermediate. Residues Cys-60 and Cys-93 are joined by a disulfide bond.

The protein belongs to the peroxiredoxin family. Tpx subfamily. Homodimer.

It carries out the reaction a hydroperoxide + [thioredoxin]-dithiol = an alcohol + [thioredoxin]-disulfide + H2O. Thiol-specific peroxidase that catalyzes the reduction of hydrogen peroxide and organic hydroperoxides to water and alcohols, respectively. Plays a role in cell protection against oxidative stress by detoxifying peroxides. This chain is Thiol peroxidase, found in Staphylococcus saprophyticus subsp. saprophyticus (strain ATCC 15305 / DSM 20229 / NCIMB 8711 / NCTC 7292 / S-41).